Here is a 1040-residue protein sequence, read N- to C-terminus: Multidrug resistance protein MdtB (1040 aa).

12 helical membrane passes run 25–45, 347–367, 369–389, 396–416, 440–460, 472–492, 537–557, 863–883, 888–908, 910–930, 968–988, and 998–1018; these read LLMAAILLAGIIGYRFLPVAA, LMLAIALVVMIIYLFLRNIPA, IIPGVAVPLSLIGTFAVMVFL, LTLMALTIATGFVVDDAIVVI, IGFTIISLTFSLIAVLIPLLF, FAVTLAVAILISAVVSLTLTP, WLTLSVAFATLLLSVMLWIVI, LGSTVWLIVAAVVAMYIVLGV, FIHPITILSTLPTAGVGALLA, IIAGSELDIIAIIGIILLIGI, ILMTTLAALLGALPLMLSTGV, and IAMVGGLLVSQVLTLFTTPVI.

This sequence belongs to the resistance-nodulation-cell division (RND) (TC 2.A.6) family. MdtB subfamily. As to quaternary structure, part of a tripartite efflux system composed of MdtA, MdtB and MdtC. MdtB forms a heteromultimer with MdtC.

The protein resides in the cell inner membrane. The protein is Multidrug resistance protein MdtB of Salmonella schwarzengrund (strain CVM19633).